Consider the following 111-residue polypeptide: Putative splicing factor C222.18 (111 aa).

An RRM domain is found at 18–95 (HTLYIRNFGT…DIIFVEWAKS (78 aa)).

The protein belongs to the splicing factor SR family.

The protein localises to the nucleus. Functionally, has a role in pre-mRNA splicing where it is involved in spliceosome assembly. This chain is Putative splicing factor C222.18, found in Schizosaccharomyces pombe (strain 972 / ATCC 24843) (Fission yeast).